The primary structure comprises 403 residues: Esterase LipC (403 aa).

Residues serine 237, aspartate 334, and histidine 367 contribute to the active site.

It belongs to the 'GDXG' lipolytic enzyme family.

It localises to the cell surface. It is found in the secreted. The protein resides in the cell wall. The protein localises to the capsule. It carries out the reaction a fatty acid ester + H2O = an aliphatic alcohol + a fatty acid + H(+). The enzyme catalyses a butanoate ester + H2O = an aliphatic alcohol + butanoate + H(+). It catalyses the reaction a hexanoate ester + H2O = an aliphatic alcohol + hexanoate + H(+). The catalysed reaction is an acetyl ester + H2O = an aliphatic alcohol + acetate + H(+). It carries out the reaction an octanoate ester + H2O = an aliphatic alcohol + octanoate + H(+). The enzyme catalyses decanoate ester + H2O = decanoate + an aliphatic alcohol + H(+). Esterase that can hydrolyze short-chain esters with the carbon chain containing 2 to 10 carbon atoms. Does not have lipase activity. Is highly immunogenic and elicits strong humoral immune responses in both HIV-negative (HIV-) and HIV-positive (HIV+) tuberculosis (TB) patients. Also elicits pro-inflammatory cytokine and chemokine responses from macrophages and pulmonary epithelial cells. May participate in the progression of active tuberculosis both by contributing to the utilization of lipid substrates for bacterial growth and replication, and by modulating immune responses. This is Esterase LipC from Mycobacterium tuberculosis (strain ATCC 25618 / H37Rv).